Reading from the N-terminus, the 365-residue chain is Mitogen-activated protein kinase HOG1 (365 aa).

The Protein kinase domain maps to 20–299 (YVDLQPVGMG…AAEGLAHEYL (280 aa)). ATP is bound by residues 26–34 (VGMGAFGLV) and Lys-49. Asp-141 acts as the Proton acceptor in catalysis. Thr-171 carries the phosphothreonine modification. A TXY motif is present at residues 171-173 (TGY). Residue Tyr-173 is modified to Phosphotyrosine.

Belongs to the protein kinase superfamily. Ser/Thr protein kinase family. MAP kinase subfamily. HOG1 sub-subfamily. Requires Mg(2+) as cofactor. Dually phosphorylated on Thr-171 and Tyr-173, which activates the enzyme. Phosphorylated by PBS2 after osmotic stress.

It localises to the cytoplasm. The protein resides in the nucleus. The enzyme catalyses L-seryl-[protein] + ATP = O-phospho-L-seryl-[protein] + ADP + H(+). It catalyses the reaction L-threonyl-[protein] + ATP = O-phospho-L-threonyl-[protein] + ADP + H(+). Its activity is regulated as follows. Activated by tyrosine and threonine phosphorylation. Its function is as follows. Proline-directed serine/threonine-protein kinase involved in a signal transduction pathway that is activated by changes in the osmolarity of the extracellular environment. Controls osmotic regulation of transcription of target genes. Also involved in the response to UV radiation and mediates the sensitivity to fludioxonil, an agricultural fungicide. This Cryptococcus neoformans var. neoformans serotype D (strain B-3501A) (Filobasidiella neoformans) protein is Mitogen-activated protein kinase HOG1 (HOG1).